Consider the following 452-residue polypeptide: Aspartyl/glutamyl-tRNA(Asn/Gln) amidotransferase subunit B (452 aa).

The protein belongs to the GatB/GatE family. GatB subfamily. As to quaternary structure, heterotrimer of A, B and C subunits.

It catalyses the reaction L-glutamyl-tRNA(Gln) + L-glutamine + ATP + H2O = L-glutaminyl-tRNA(Gln) + L-glutamate + ADP + phosphate + H(+). It carries out the reaction L-aspartyl-tRNA(Asn) + L-glutamine + ATP + H2O = L-asparaginyl-tRNA(Asn) + L-glutamate + ADP + phosphate + 2 H(+). Functionally, allows the formation of correctly charged Asn-tRNA(Asn) or Gln-tRNA(Gln) through the transamidation of misacylated Asp-tRNA(Asn) or Glu-tRNA(Gln) in organisms which lack either or both of asparaginyl-tRNA or glutaminyl-tRNA synthetases. The reaction takes place in the presence of glutamine and ATP through an activated phospho-Asp-tRNA(Asn) or phospho-Glu-tRNA(Gln). This is Aspartyl/glutamyl-tRNA(Asn/Gln) amidotransferase subunit B from Methanosphaera stadtmanae (strain ATCC 43021 / DSM 3091 / JCM 11832 / MCB-3).